The primary structure comprises 509 residues: ATP synthase subunit alpha (509 aa).

169–176 contacts ATP; that stretch reads GDRQTGKT.

The protein belongs to the ATPase alpha/beta chains family. F-type ATPases have 2 components, CF(1) - the catalytic core - and CF(0) - the membrane proton channel. CF(1) has five subunits: alpha(3), beta(3), gamma(1), delta(1), epsilon(1). CF(0) has three main subunits: a(1), b(2) and c(9-12). The alpha and beta chains form an alternating ring which encloses part of the gamma chain. CF(1) is attached to CF(0) by a central stalk formed by the gamma and epsilon chains, while a peripheral stalk is formed by the delta and b chains.

Its subcellular location is the cell inner membrane. It catalyses the reaction ATP + H2O + 4 H(+)(in) = ADP + phosphate + 5 H(+)(out). Produces ATP from ADP in the presence of a proton gradient across the membrane. The alpha chain is a regulatory subunit. In Rhizobium meliloti (strain 1021) (Ensifer meliloti), this protein is ATP synthase subunit alpha.